The following is a 112-amino-acid chain: Putative pterin-4-alpha-carbinolamine dehydratase (112 aa).

Belongs to the pterin-4-alpha-carbinolamine dehydratase family.

The catalysed reaction is (4aS,6R)-4a-hydroxy-L-erythro-5,6,7,8-tetrahydrobiopterin = (6R)-L-erythro-6,7-dihydrobiopterin + H2O. The chain is Putative pterin-4-alpha-carbinolamine dehydratase from Shewanella baltica (strain OS223).